Reading from the N-terminus, the 249-residue chain is Adapter protein MecA (249 aa).

This sequence belongs to the MecA family. As to quaternary structure, homodimer.

In terms of biological role, enables the recognition and targeting of unfolded and aggregated proteins to the ClpC protease or to other proteins involved in proteolysis. The polypeptide is Adapter protein MecA (Streptococcus thermophilus (strain ATCC BAA-491 / LMD-9)).